Reading from the N-terminus, the 286-residue chain is Protein Bride of doubletime (286 aa).

In terms of assembly, interacts with dco (via nuclear localization signal). Interacts with Ankrd49; interaction promotes the stability of both complex members.

It is found in the cytoplasm. It localises to the cytosol. The protein localises to the cell membrane. Functions in planar polarity establishment and circadian rhythms by promoting the activity and localization of dco/dbt. Required for regulating the levels of dco/dbt and per in the nuclei of photoreceptor cells and thereby is involved in normal oscillations of the circadian clock proteins in the eye. In the dark, the cry circadian and rhodopsin visual pathways, activate the accumulation of the protein into Arr1- and Arr2-dependent cytosolic foci which are required for dco localization to photoreceptor nuclei. It is possible that the accumulation into foci results in the dissociation of the protein from dco, thus allowing dco to interact with importins and microtubles for nuclear transport. By promoting nuclei localization and kinase activity of dco towards per, it is essential for regulating normal cycles of per nuclear accumulation in brain circadian neurons and thus is important for normal circadian behavior. Essential for regulating the establishment of planar cell polarity in the wing. Forms a complex with Ankrd49 which likely functions in the regulation of planar polarity by promoting the activity of dco during planar polarity establishment. Within the complex, directly promotes dco activity in regulating phosphorylation and asymmetric localization of core planar polarity proteins such as dsh. The protein is Protein Bride of doubletime of Drosophila melanogaster (Fruit fly).